The primary structure comprises 312 residues: Type II methyltransferase M.NgoMIV (312 aa).

The 309-residue stretch at 3-311 (FTSLEICAGA…RQIIKALKKE (309 aa)) folds into the SAM-dependent MTase C5-type domain. Residue cysteine 74 is part of the active site.

This sequence belongs to the class I-like SAM-binding methyltransferase superfamily. C5-methyltransferase family.

It catalyses the reaction a 2'-deoxycytidine in DNA + S-adenosyl-L-methionine = a 5-methyl-2'-deoxycytidine in DNA + S-adenosyl-L-homocysteine + H(+). In terms of biological role, a methylase, recognizes the double-stranded sequence 5'-GCCGGC-3', methylates C-2 on both strands, and protects the DNA from cleavage by the NgoMIV endonuclease. In Neisseria gonorrhoeae, this protein is Type II methyltransferase M.NgoMIV (ngoMIVM).